Reading from the N-terminus, the 91-residue chain is Small ribosomal subunit protein bS18 (91 aa).

The protein belongs to the bacterial ribosomal protein bS18 family. In terms of assembly, part of the 30S ribosomal subunit. Forms a tight heterodimer with protein bS6.

In terms of biological role, binds as a heterodimer with protein bS6 to the central domain of the 16S rRNA, where it helps stabilize the platform of the 30S subunit. This chain is Small ribosomal subunit protein bS18, found in Burkholderia ambifaria (strain MC40-6).